We begin with the raw amino-acid sequence, 124 residues long: Small ribosomal subunit protein uS12 (124 aa).

Residues 1-27 (MPTINQLIRKPRKSQTEKTASPALQNC) form a disordered region. The segment covering 17–27 (EKTASPALQNC) has biased composition (polar residues). Position 89 is a 3-methylthioaspartic acid (Asp-89).

The protein belongs to the universal ribosomal protein uS12 family. Part of the 30S ribosomal subunit. Contacts proteins S8 and S17. May interact with IF1 in the 30S initiation complex.

Functionally, with S4 and S5 plays an important role in translational accuracy. Its function is as follows. Interacts with and stabilizes bases of the 16S rRNA that are involved in tRNA selection in the A site and with the mRNA backbone. Located at the interface of the 30S and 50S subunits, it traverses the body of the 30S subunit contacting proteins on the other side and probably holding the rRNA structure together. The combined cluster of proteins S8, S12 and S17 appears to hold together the shoulder and platform of the 30S subunit. The polypeptide is Small ribosomal subunit protein uS12 (Borreliella afzelii (strain PKo) (Borrelia afzelii)).